Here is a 115-residue protein sequence, read N- to C-terminus: Large ribosomal subunit protein bL21 (115 aa).

Belongs to the bacterial ribosomal protein bL21 family. In terms of assembly, part of the 50S ribosomal subunit. Contacts protein L20.

Its function is as follows. This protein binds to 23S rRNA in the presence of protein L20. This is Large ribosomal subunit protein bL21 from Coxiella burnetii (strain RSA 331 / Henzerling II).